Here is a 220-residue protein sequence, read N- to C-terminus: Iron-sulfur cluster repair protein YtfE (220 aa).

Belongs to the RIC family. YtfE subfamily. As to quaternary structure, homodimer.

Its subcellular location is the cytoplasm. Di-iron-containing protein involved in the repair of iron-sulfur clusters damaged by oxidative and nitrosative stress conditions. This is Iron-sulfur cluster repair protein YtfE from Salmonella choleraesuis (strain SC-B67).